Here is a 607-residue protein sequence, read N- to C-terminus: Putative pentatricopeptide repeat-containing protein At1g09680 (607 aa).

9 PPR repeats span residues 239–273, 274–308, 309–343, 344–378, 379–413, 414–448, 449–483, 484–518, and 519–553; these read NVYV…SLQP, TVVS…RTRP, DVFT…GLIP, NDVI…GLQP, DIVL…GLRP, DKIT…GIEL, DRVG…GIKP, DDVT…GHVP, and SVVT…GVVP.

It belongs to the PPR family. P subfamily.

In Arabidopsis thaliana (Mouse-ear cress), this protein is Putative pentatricopeptide repeat-containing protein At1g09680.